The following is a 326-amino-acid chain: Tetraacyldisaccharide 4'-kinase (326 aa).

An ATP-binding site is contributed by 58 to 65; sequence SVGGNGKT.

Belongs to the LpxK family.

It carries out the reaction a lipid A disaccharide + ATP = a lipid IVA + ADP + H(+). It functions in the pathway glycolipid biosynthesis; lipid IV(A) biosynthesis; lipid IV(A) from (3R)-3-hydroxytetradecanoyl-[acyl-carrier-protein] and UDP-N-acetyl-alpha-D-glucosamine: step 6/6. Its function is as follows. Transfers the gamma-phosphate of ATP to the 4'-position of a tetraacyldisaccharide 1-phosphate intermediate (termed DS-1-P) to form tetraacyldisaccharide 1,4'-bis-phosphate (lipid IVA). This Pseudoalteromonas translucida (strain TAC 125) protein is Tetraacyldisaccharide 4'-kinase.